The chain runs to 485 residues: Cytoplasmic tRNA 2-thiolation protein 2 (485 aa).

This sequence belongs to the CTU2/NCS2 family.

Its subcellular location is the cytoplasm. It functions in the pathway tRNA modification; 5-methoxycarbonylmethyl-2-thiouridine-tRNA biosynthesis. Plays a central role in 2-thiolation of mcm(5)S(2)U at tRNA wobble positions of tRNA(Lys), tRNA(Glu) and tRNA(Gln). May act by forming a heterodimer with NCS6 that ligates sulfur from thiocarboxylated URM1 onto the uridine of tRNAs at wobble position. Prior mcm(5) tRNA modification by the elongator complex is required for 2-thiolation. May also be involved in protein urmylation. The sequence is that of Cytoplasmic tRNA 2-thiolation protein 2 from Vanderwaltozyma polyspora (strain ATCC 22028 / DSM 70294 / BCRC 21397 / CBS 2163 / NBRC 10782 / NRRL Y-8283 / UCD 57-17) (Kluyveromyces polysporus).